A 200-amino-acid polypeptide reads, in one-letter code: Probable nicotinate-nucleotide adenylyltransferase (200 aa).

The protein belongs to the NadD family.

The enzyme catalyses nicotinate beta-D-ribonucleotide + ATP + H(+) = deamido-NAD(+) + diphosphate. It participates in cofactor biosynthesis; NAD(+) biosynthesis; deamido-NAD(+) from nicotinate D-ribonucleotide: step 1/1. In terms of biological role, catalyzes the reversible adenylation of nicotinate mononucleotide (NaMN) to nicotinic acid adenine dinucleotide (NaAD). In Leifsonia xyli subsp. xyli (strain CTCB07), this protein is Probable nicotinate-nucleotide adenylyltransferase.